Reading from the N-terminus, the 429-residue chain is Oxysterol-binding protein-like protein OBPalpha (429 aa).

Belongs to the OSBP family.

The polypeptide is Oxysterol-binding protein-like protein OBPalpha (OBPALPHA) (Candida albicans (strain SC5314 / ATCC MYA-2876) (Yeast)).